Consider the following 75-residue polypeptide: Exodeoxyribonuclease 7 small subunit (75 aa).

The protein belongs to the XseB family. As to quaternary structure, heterooligomer composed of large and small subunits.

Its subcellular location is the cytoplasm. The catalysed reaction is Exonucleolytic cleavage in either 5'- to 3'- or 3'- to 5'-direction to yield nucleoside 5'-phosphates.. In terms of biological role, bidirectionally degrades single-stranded DNA into large acid-insoluble oligonucleotides, which are then degraded further into small acid-soluble oligonucleotides. The chain is Exodeoxyribonuclease 7 small subunit from Listeria monocytogenes serotype 4b (strain CLIP80459).